The chain runs to 1266 residues: Formin-like protein 13 (1266 aa).

A Phosphatase tensin-type domain is found at 9-193 (YRKPPDGLLE…QYVSRRNLVS (185 aa)). C126 (phosphocysteine intermediate) is an active-site residue. The region spanning 199 to 337 (DRALTMDCVI…FRVELLFSDM (139 aa)) is the C2 tensin-type domain. Disordered stretches follow at residues 497 to 568 (KPLV…LQHS), 597 to 825 (KNLI…GKGR), 881 to 902 (SASA…PKPE), and 1210 to 1266 (QLEA…RTAP). Residues 529–538 (PPTPSPPHPV) show a composition bias toward pro residues. Residues 617 to 644 (EPSSKTTNSLLLSPQASPATPTNPSKTV) are compositionally biased toward polar residues. 4 stretches are compositionally biased toward pro residues: residues 686 to 698 (LPRP…PPPM), 706 to 742 (VPPP…PPTP), 754 to 781 (PPAP…PPPL), and 806 to 815 (PNVPPTPALP). The FH2 domain occupies 829–1226 (VNLKNSPAKK…KNAAEKEKPK (398 aa)). 3 stretches are compositionally biased toward basic and acidic residues: residues 889 to 902 (GKSR…PKPE), 1210 to 1248 (QLEA…EKTK), and 1255 to 1266 (EMSDRLKERTAP).

This sequence belongs to the formin-like family. Class-II subfamily.

In Arabidopsis thaliana (Mouse-ear cress), this protein is Formin-like protein 13 (FH13).